The chain runs to 647 residues: Protein cueball (647 aa).

Residues 1-22 form the signal peptide; that stretch reads MLWCPSVLVPLIAVAACLPVLA. At 23–534 the chain is on the extracellular side; sequence IGTPLEWEFA…CMTPSPWTSN (512 aa). Residues N80 and N106 are each glycosylated (N-linked (GlcNAc...) asparagine). LDL-receptor class B repeat units lie at residues 119–166, 167–211, and 212–257; these read RNLF…DVCR, RKLY…DQLS, and DRIF…TNDA. N175 carries N-linked (GlcNAc...) asparagine glycosylation. N-linked (GlcNAc...) asparagine glycosylation is present at N316. 2 consecutive EGF-like domains span residues 365–401 and 436–473; these read DEKT…SRCE and EISK…ERCE. 5 disulfide bridges follow: C376/C389, C391/C400, C440/C450, C444/C461, and C463/C472. N475 carries an N-linked (GlcNAc...) asparagine glycan. The chain crosses the membrane as a helical span at residues 535–555; that stretch reads VIIVLVLGIVSCFFLVAVIVH. The Cytoplasmic portion of the chain corresponds to 556-647; sequence GFRRLYKPKR…LIHNMDDDLY (92 aa).

It belongs to the cueball family.

It is found in the cell membrane. Its function is as follows. Has a role in spermatogenesis and oogenesis. The chain is Protein cueball from Drosophila persimilis (Fruit fly).